We begin with the raw amino-acid sequence, 722 residues long: Putative tyrosine-protein kinase in cps region (722 aa).

A run of 2 helical transmembrane segments spans residues 31 to 53 (IIIALTSFATLIALLYAFFATPI) and 427 to 449 (IVVLAGLFIGLVISVSLVLVRIL).

Belongs to the etk/wzc family. Post-translationally, autophosphorylated on tyrosine residue(s).

Its subcellular location is the cell inner membrane. It catalyses the reaction L-tyrosyl-[protein] + ATP = O-phospho-L-tyrosyl-[protein] + ADP + H(+). It functions in the pathway glycan metabolism; exopolysaccharide biosynthesis. This Klebsiella pneumoniae protein is Putative tyrosine-protein kinase in cps region.